The following is a 348-amino-acid chain: Probable dual-specificity RNA methyltransferase RlmN (348 aa).

Residue Glu-92 is the Proton acceptor of the active site. Positions 98–331 (HPDRVTACIS…NEIRREKGTD (234 aa)) constitute a Radical SAM core domain. A disulfide bridge links Cys-105 with Cys-336. Residues Cys-112, Cys-116, and Cys-119 each coordinate [4Fe-4S] cluster. Residues 159–160 (GE), Ser-191, 214–216 (SLH), and Asn-290 contribute to the S-adenosyl-L-methionine site. Cys-336 (S-methylcysteine intermediate) is an active-site residue.

This sequence belongs to the radical SAM superfamily. RlmN family. The cofactor is [4Fe-4S] cluster.

Its subcellular location is the cytoplasm. It catalyses the reaction adenosine(2503) in 23S rRNA + 2 reduced [2Fe-2S]-[ferredoxin] + 2 S-adenosyl-L-methionine = 2-methyladenosine(2503) in 23S rRNA + 5'-deoxyadenosine + L-methionine + 2 oxidized [2Fe-2S]-[ferredoxin] + S-adenosyl-L-homocysteine. It carries out the reaction adenosine(37) in tRNA + 2 reduced [2Fe-2S]-[ferredoxin] + 2 S-adenosyl-L-methionine = 2-methyladenosine(37) in tRNA + 5'-deoxyadenosine + L-methionine + 2 oxidized [2Fe-2S]-[ferredoxin] + S-adenosyl-L-homocysteine. Specifically methylates position 2 of adenine 2503 in 23S rRNA and position 2 of adenine 37 in tRNAs. This chain is Probable dual-specificity RNA methyltransferase RlmN, found in Fervidobacterium nodosum (strain ATCC 35602 / DSM 5306 / Rt17-B1).